Reading from the N-terminus, the 271-residue chain is Formamidopyrimidine-DNA glycosylase (271 aa).

The Schiff-base intermediate with DNA role is filled by Pro2. Catalysis depends on Glu3, which acts as the Proton donor. Lys58 acts as the Proton donor; for beta-elimination activity in catalysis. DNA-binding residues include His92, Arg111, and Lys152. An FPG-type zinc finger spans residues 237 to 271 (YVYGKVQKPCKICNNTITLIRQNGRSTYFCNACQN). Residue Arg261 is the Proton donor; for delta-elimination activity of the active site.

The protein belongs to the FPG family. In terms of assembly, monomer. Zn(2+) is required as a cofactor.

It carries out the reaction Hydrolysis of DNA containing ring-opened 7-methylguanine residues, releasing 2,6-diamino-4-hydroxy-5-(N-methyl)formamidopyrimidine.. The enzyme catalyses 2'-deoxyribonucleotide-(2'-deoxyribose 5'-phosphate)-2'-deoxyribonucleotide-DNA = a 3'-end 2'-deoxyribonucleotide-(2,3-dehydro-2,3-deoxyribose 5'-phosphate)-DNA + a 5'-end 5'-phospho-2'-deoxyribonucleoside-DNA + H(+). In terms of biological role, involved in base excision repair of DNA damaged by oxidation or by mutagenic agents. Acts as a DNA glycosylase that recognizes and removes damaged bases. Has a preference for oxidized purines, such as 7,8-dihydro-8-oxoguanine (8-oxoG). Has AP (apurinic/apyrimidinic) lyase activity and introduces nicks in the DNA strand. Cleaves the DNA backbone by beta-delta elimination to generate a single-strand break at the site of the removed base with both 3'- and 5'-phosphates. In Wolbachia sp. subsp. Brugia malayi (strain TRS), this protein is Formamidopyrimidine-DNA glycosylase.